The primary structure comprises 799 residues: High affinity nerve growth factor receptor (799 aa).

The signal sequence occupies residues methionine 1 to cysteine 32. At alanine 33–proline 418 the chain is on the extracellular side. Cystine bridges form between cysteine 36–cysteine 41 and cysteine 40–cysteine 50. An N-linked (GlcNAc...) asparagine glycan is attached at asparagine 67. LRR repeat units lie at residues leucine 90–phenylalanine 113 and arginine 116–glycine 137. 10 N-linked (GlcNAc...) asparagine glycosylation sites follow: asparagine 121, asparagine 190, asparagine 204, asparagine 255, asparagine 264, asparagine 320, asparagine 325, asparagine 341, asparagine 361, and asparagine 404. The LRRCT domain maps to asparagine 148–valine 219. Cysteine 154 and cysteine 193 are oxidised to a cystine. 2 Ig-like C2-type domains span residues proline 196–serine 285 and alanine 295–asparagine 368. Disulfide bonds link cysteine 217-cysteine 267 and cysteine 302-cysteine 348. The helical transmembrane segment at phenylalanine 419–leucine 442 threads the bilayer. Residues asparagine 443–glycine 799 are Cytoplasmic-facing. Positions methionine 472 to isoleucine 493 are interaction with SQSTM1. Position 499 is a phosphotyrosine; by autocatalysis (tyrosine 499). The 272-residue stretch at isoleucine 513 to leucine 784 folds into the Protein kinase domain. ATP is bound by residues leucine 519–valine 527 and lysine 547. The active-site Proton acceptor is the aspartate 653. Tyrosine 679, tyrosine 683, tyrosine 684, and tyrosine 794 each carry phosphotyrosine; by autocatalysis.

This sequence belongs to the protein kinase superfamily. Tyr protein kinase family. Insulin receptor subfamily. As to quaternary structure, exists in a dynamic equilibrium between monomeric (low affinity) and dimeric (high affinity) structures. Homodimerization is induced by binding of a NGF dimer. Found in a complex, at least composed of KIDINS220, MAGI2, NTRK1 and RAPGEF2; the complex is mainly formed at late endosomes in a nerve growth factor (NGF)-dependent manner. Interacts with RAPGEF2; the interaction is strengthened after NGF stimulation. Interacts with SQSTM1; bridges NTRK1 to NGFR. Forms a ternary complex with NGFR and KIDINS220; this complex is affected by the expression levels of KIDINS220 and an increase in KIDINS220 expression leads to a decreased association of NGFR and NTRK1. Interacts (phosphorylated upon activation by NGF) with SHC1; mediates SHC1 phosphorylation and activation. Interacts (phosphorylated upon activation by NGF) with PLCG1; mediates PLCG1 phosphorylation and activation. Interacts (phosphorylated) with SH2B1 and SH2B2. Interacts with GRB2. Interacts with PIK3R1. Interacts with FRS2. Interacts with SORT1; may regulate NTRK1 anterograde axonal transport. Interacts with SH2D1A; regulates NTRK1. Interacts with NRADD. Interacts with RAB7A. Interacts with PTPRS. Interacts with USP36; USP36 does not deubiquitinate NTRK1. Interacts with GGA3. Interacts with TSPAN1; this interaction promotes NTRK1 stability. Post-translationally, ligand-mediated autophosphorylation. Interaction with SQSTM1 is phosphotyrosine-dependent. Autophosphorylation at Tyr-499 mediates interaction and phosphorylation of SHC1. N-glycosylated. In terms of processing, ubiquitinated. Undergoes polyubiquitination upon activation; regulated by NGFR. Ubiquitination by NEDD4L leads to degradation. Ubiquitination regulates the internalization of the receptor. Isoform Trka-II is primarily expressed in neuronal cells; isoform Trka-I is found in non-neuronal tissues.

Its subcellular location is the cell membrane. The protein resides in the early endosome membrane. The protein localises to the late endosome membrane. It localises to the recycling endosome membrane. The catalysed reaction is L-tyrosyl-[protein] + ATP = O-phospho-L-tyrosyl-[protein] + ADP + H(+). The pro-survival signaling effect of NTRK1 in neurons requires its endocytosis into signaling early endosomes and its retrograde axonal transport. This is regulated by different proteins including CFL1, RAC1 and SORT1. NTF3 is unable to induce this signaling probably due to the lability of the NTF3-NTRK1 complex in endosomes. SH2D1A inhibits the autophosphorylation of the receptor, and alters the recruitment and activation of downstream effectors and signaling cascades. Regulated by NGFR. Functionally, receptor tyrosine kinase involved in the development and the maturation of the central and peripheral nervous systems through regulation of proliferation, differentiation and survival of sympathetic and nervous neurons. High affinity receptor for NGF which is its primary ligand. Can also bind and be activated by NTF3/neurotrophin-3. However, NTF3 only supports axonal extension through NTRK1 but has no effect on neuron survival. Upon dimeric NGF ligand-binding, undergoes homodimerization, autophosphorylation and activation. Recruits, phosphorylates and/or activates several downstream effectors including SHC1, FRS2, SH2B1, SH2B2 and PLCG1 that regulate distinct overlapping signaling cascades driving cell survival and differentiation. Through SHC1 and FRS2 activates a GRB2-Ras-MAPK cascade that regulates cell differentiation and survival. Through PLCG1 controls NF-Kappa-B activation and the transcription of genes involved in cell survival. Through SHC1 and SH2B1 controls a Ras-PI3 kinase-AKT1 signaling cascade that is also regulating survival. In absence of ligand and activation, may promote cell death, making the survival of neurons dependent on trophic factors. This Rattus norvegicus (Rat) protein is High affinity nerve growth factor receptor (Ntrk1).